A 178-amino-acid polypeptide reads, in one-letter code: Ribulose bisphosphate carboxylase small subunit, chloroplastic 2 (178 aa).

A chloroplast-targeting transit peptide spans 1-54 (MASISSTVATVSRAAPAQANMVAPFTGLKSNVAFPATKKANDFSTLPSNGGRVQ).

The protein belongs to the RuBisCO small chain family. Heterohexadecamer of 8 large and 8 small subunits.

Its subcellular location is the plastid. The protein localises to the chloroplast. Functionally, ruBisCO catalyzes two reactions: the carboxylation of D-ribulose 1,5-bisphosphate, the primary event in carbon dioxide fixation, as well as the oxidative fragmentation of the pentose substrate. Both reactions occur simultaneously and in competition at the same active site. Although the small subunit is not catalytic it is essential for maximal activity. The protein is Ribulose bisphosphate carboxylase small subunit, chloroplastic 2 of Flaveria pringlei.